Reading from the N-terminus, the 221-residue chain is Small ribosomal subunit protein uS5 (221 aa).

The S5 DRBM domain maps to I46–I109.

It belongs to the universal ribosomal protein uS5 family. As to quaternary structure, part of the 30S ribosomal subunit. Contacts protein S4.

Its function is as follows. With S4 and S12 plays an important role in translational accuracy. This chain is Small ribosomal subunit protein uS5, found in Thermoplasma volcanium (strain ATCC 51530 / DSM 4299 / JCM 9571 / NBRC 15438 / GSS1).